Here is a 403-residue protein sequence, read N- to C-terminus: S-arrestin (403 aa).

The interaction with RHO stretch occupies residues 11–19; sequence HVIFKKVSR. Thr-231 carries the post-translational modification Phosphothreonine. Residues 381-403 are disordered; it reads RQNLKDTGENTEGKKDEDAGQDE.

The protein belongs to the arrestin family. In terms of assembly, monomer. Homodimer. Homotetramer. Interacts with RHO (via the phosphorylated C-terminus). Detected in retina (at protein level).

Its subcellular location is the cell projection. The protein resides in the cilium. It localises to the photoreceptor outer segment. The protein localises to the membrane. In terms of biological role, binds to photoactivated, phosphorylated RHO and terminates RHO signaling via G-proteins by competing with G-proteins for the same binding site on RHO. May play a role in preventing light-dependent degeneration of retinal photoreceptor cells. This is S-arrestin (Sag) from Mus musculus (Mouse).